Here is a 189-residue protein sequence, read N- to C-terminus: MRIGVLALQGAFIEHIRMLERLGVETFEIRNLSDLKEIPDGLILPGGESTVMSKLLQDLGLFEKLRSLIMTGTPVMGTCAGLILLAKYIEGGSPSLGTMDITAVRNAYGRQLGSFQATAPFAGAGNIQMTFIRAPMITHVGKNVKVLAEVDGVVVAAREDNQLVLSFHPELGEDTFVHQYFLEMIAGTN.

47 to 49 (GES) serves as a coordination point for L-glutamine. The active-site Nucleophile is Cys79. L-glutamine is bound by residues Arg105 and 132–133 (IR). Catalysis depends on charge relay system residues His168 and Glu170.

Belongs to the glutaminase PdxT/SNO family. In terms of assembly, in the presence of PdxS, forms a dodecamer of heterodimers. Only shows activity in the heterodimer.

The catalysed reaction is aldehydo-D-ribose 5-phosphate + D-glyceraldehyde 3-phosphate + L-glutamine = pyridoxal 5'-phosphate + L-glutamate + phosphate + 3 H2O + H(+). It carries out the reaction L-glutamine + H2O = L-glutamate + NH4(+). It participates in cofactor biosynthesis; pyridoxal 5'-phosphate biosynthesis. Functionally, catalyzes the hydrolysis of glutamine to glutamate and ammonia as part of the biosynthesis of pyridoxal 5'-phosphate. The resulting ammonia molecule is channeled to the active site of PdxS. The polypeptide is Pyridoxal 5'-phosphate synthase subunit PdxT (Methanocorpusculum labreanum (strain ATCC 43576 / DSM 4855 / Z)).